Here is a 144-residue protein sequence, read N- to C-terminus: Single-stranded DNA-binding protein 3 (144 aa).

An SSB domain is found at 1–103 (MNKVVLIGRL…IVAEEVQFLE (103 aa)). Polar residues predominate over residues 112-134 (MANDQFNNGNENGSMQLPDNNDI). The disordered stretch occupies residues 112–144 (MANDQFNNGNENGSMQLPDNNDITPIDDGDIPF).

As to quaternary structure, homotetramer.

The protein is Single-stranded DNA-binding protein 3 (ssb3) of Clostridium acetobutylicum (strain ATCC 824 / DSM 792 / JCM 1419 / IAM 19013 / LMG 5710 / NBRC 13948 / NRRL B-527 / VKM B-1787 / 2291 / W).